We begin with the raw amino-acid sequence, 190 residues long: uncharacterized protein (190 aa).

A Macro domain is found at 1–185; the sequence is MITMFKIVRG…LALETIGLGD (185 aa).

This is an uncharacterized protein from Pyrococcus horikoshii (strain ATCC 700860 / DSM 12428 / JCM 9974 / NBRC 100139 / OT-3).